Here is a 342-residue protein sequence, read N- to C-terminus: Inositol-tetrakisphosphate 1-kinase 1 (342 aa).

1D-myo-inositol 6-phosphate-binding residues include K28 and K70. ATP-binding residues include R105 and K155. Residues 116–332 (DHAADQDSTF…HKDGVGNQQE (217 aa)) enclose the ATP-grasp domain. Residues G161 and H166 each coordinate 1D-myo-inositol 6-phosphate. Residues H166, Q187, and V190 each coordinate ATP. The 1D-myo-inositol 6-phosphate site is built by K198 and Y200. Residue S213 participates in ATP binding. Residues 219 to 247 (PEDDASAQGSVSFSQVSNLPTERTAEEYY) form a catalytic specificity elements (CSE) region. A 1D-myo-inositol 6-phosphate-binding site is contributed by N280. Residue D282 coordinates Mg(2+). Positions 296, 297, and 299 each coordinate ATP. Positions 297 and 299 each coordinate Mg(2+). Residues N299, G303, and K306 each contribute to the 1D-myo-inositol 6-phosphate site.

The protein belongs to the ITPK1 family. In terms of assembly, monomer. Requires Mg(2+) as cofactor. As to expression, expressed in the embryo of 15 day after pollination. Expressed in kernels at earlier stages but at very low levels. Expression in the embryo peaks at 15 days after pollination and then declines. No expression is detected from endosperm and vegetative tissues.

It catalyses the reaction 1D-myo-inositol 3,4,5,6-tetrakisphosphate + ATP = 1D-myo-inositol 1,3,4,5,6-pentakisphosphate + ADP + H(+). The catalysed reaction is 1D-myo-inositol 1,3,4-trisphosphate + ATP = 1D-myo-inositol 1,3,4,5-tetrakisphosphate + ADP + H(+). It carries out the reaction 1D-myo-inositol 1,3,4-trisphosphate + ATP = 1D-myo-inositol 1,3,4,6-tetrakisphosphate + ADP + H(+). The enzyme catalyses 1D-myo-inositol 1,2,3,4,5-pentakisphosphate + ATP = 3-diphospho-1D-myo-inositol 1,2,4,5-tetrakisphosphate + ADP. It catalyses the reaction 1D-myo-inositol hexakisphosphate + ATP = 5-diphospho-1D-myo-inositol 1,2,3,4,6-pentakisphosphate + ADP. Its function is as follows. Kinase that can phosphorylate various inositol polyphosphate such as Ins(3,4,5,6)P4 or Ins(1,3,4)P3 and participates in phytic acid biosynthesis in developing seeds. Phosphorylates Ins(3,4,5,6)P4 at position 1 to form Ins(1,3,4,5,6)P5. This reaction is thought to have regulatory importance, since Ins(3,4,5,6)P4 is an inhibitor of plasma membrane Ca(2+)-activated Cl(-) channels, while Ins(1,3,4,5,6)P5 is not. Also phosphorylates Ins(1,3,4)P3 on O-5 and O-6 to form Ins(1,3,4,6)P4, an essential molecule in the hexakisphosphate (InsP6) pathway. Also able to phosphorylate Ins(3,5,6)P3 but not Ins(1,4,5)P3, Ins(2,4,5)P3, Ins(1,3,4,6)P4 nor Ins(1,3,5,6)P4. Has higher specific activity on Ins(3,4,5,6)P4 than Ins(1,3,4)P3 and Ins(3,5,6)P3. Can also could use Ins(1,2,5,6)P4 as a substrate. Able to add a beta-phosphate to the 3 positions of Ins(1,2,3,4,5)P5 and to add beta-phosphate to InsP6 to yield 5-InsP7, thus exhibiting InsP6 kinase activity. Also has Ins(1,3,4,5,6)P5 phosphatase activity. This is Inositol-tetrakisphosphate 1-kinase 1 from Zea mays (Maize).